Consider the following 455-residue polypeptide: Probable ATP-dependent RNA helicase DDX47 (455 aa).

Basic and acidic residues predominate over residues methionine 1–proline 10. Positions methionine 1 to glutamate 20 are disordered. Alanine 2 carries the N-acetylalanine modification. A Phosphoserine modification is found at serine 9. Residues lysine 24–isoleucine 52 carry the Q motif motif. One can recognise a Helicase ATP-binding domain in the interval isoleucine 55–cysteine 226. An ATP-binding site is contributed by alanine 68–threonine 75. At threonine 149 the chain carries Phosphothreonine. The DEAD box motif lies at aspartate 174–aspartate 177. A Helicase C-terminal domain is found at lysine 237 to methionine 397. Over residues glutamate 413–alanine 428 the composition is skewed to basic and acidic residues. Positions glutamate 413–arginine 455 are disordered. The residue at position 424 (serine 424) is a Phosphoserine.

It belongs to the DEAD box helicase family. DDX47/RRP3 subfamily. Interacts with AGO1 and AGO2. Interacts with GABARAP. Interacts with NOL8; the interaction is RNA-dependent. In terms of tissue distribution, expressed in skin, lung and breast. Also expressed in the brain.

It localises to the nucleus. The protein localises to the nucleolus. It catalyses the reaction ATP + H2O = ADP + phosphate + H(+). Its function is as follows. Required for efficient ribosome biogenesis. May have a role in mRNA splicing. Involved in apoptosis. This Homo sapiens (Human) protein is Probable ATP-dependent RNA helicase DDX47 (DDX47).